The following is a 258-amino-acid chain: Snake venom serine protease (258 aa).

The N-terminal stretch at 1–18 is a signal peptide; that stretch reads MVLIRVLANLLILQLSYA. The propeptide occupies 19-24; it reads QKSSEL. A Peptidase S1 domain is found at 25 to 249; that stretch reads VIGGDECNIN…YTEWIQSILA (225 aa). 6 disulfide bridges follow: C31–C163, C50–C66, C98–C256, C142–C210, C174–C189, and C200–C225. Active-site charge relay system residues include H65 and D110. N-linked (GlcNAc...) asparagine glycosylation occurs at N154. S204 (charge relay system) is an active-site residue.

The protein belongs to the peptidase S1 family. Snake venom subfamily. Monomer. As to expression, expressed by the venom gland.

The protein localises to the secreted. Its function is as follows. Snake venom serine protease that may act in the hemostasis system of the prey. This Lachesis stenophrys (Central American bushmaster) protein is Snake venom serine protease.